The following is a 169-amino-acid chain: S-ribosylhomocysteine lyase (169 aa).

Fe cation contacts are provided by His54, His58, and Cys128.

The protein belongs to the LuxS family. Homodimer. The cofactor is Fe cation.

It catalyses the reaction S-(5-deoxy-D-ribos-5-yl)-L-homocysteine = (S)-4,5-dihydroxypentane-2,3-dione + L-homocysteine. Its function is as follows. Involved in the synthesis of autoinducer 2 (AI-2) which is secreted by bacteria and is used to communicate both the cell density and the metabolic potential of the environment. The regulation of gene expression in response to changes in cell density is called quorum sensing. Catalyzes the transformation of S-ribosylhomocysteine (RHC) to homocysteine (HC) and 4,5-dihydroxy-2,3-pentadione (DPD). The protein is S-ribosylhomocysteine lyase of Shewanella baltica (strain OS223).